Here is a 128-residue protein sequence, read N- to C-terminus: MPKSVIIPAGSSAPLAPFVPGTLADGVVYVSGTLAFDQHNNVLFADDPKAQTRHVLETIRKVIETAGGTMADVTFNSIFITDWKNYAAINEIYAEFFPGDKPARFCIQCGLVKPDALVEIATIAHIAK.

This sequence belongs to the RutC family. As to quaternary structure, homotrimer.

The enzyme catalyses (Z)-3-aminoacrylate + H2O + H(+) = 3-oxopropanoate + NH4(+). Functionally, involved in pyrimidine catabolism. Catalyzes the deamination of 3-aminoacrylate to malonic semialdehyde, a reaction that can also occur spontaneously. RutC may facilitate the reaction and modulate the metabolic fitness, rather than catalyzing essential functions. The chain is 3-aminoacrylate deaminase RutC from Escherichia coli O103:H2 (strain 12009 / EHEC).